The chain runs to 179 residues: Large ribosomal subunit protein uL5 (179 aa).

It belongs to the universal ribosomal protein uL5 family. As to quaternary structure, part of the 50S ribosomal subunit; part of the 5S rRNA/L5/L18/L25 subcomplex. Contacts the 5S rRNA and the P site tRNA. Forms a bridge to the 30S subunit in the 70S ribosome.

Functionally, this is one of the proteins that bind and probably mediate the attachment of the 5S RNA into the large ribosomal subunit, where it forms part of the central protuberance. In the 70S ribosome it contacts protein S13 of the 30S subunit (bridge B1b), connecting the 2 subunits; this bridge is implicated in subunit movement. Contacts the P site tRNA; the 5S rRNA and some of its associated proteins might help stabilize positioning of ribosome-bound tRNAs. The sequence is that of Large ribosomal subunit protein uL5 from Vibrio vulnificus (strain CMCP6).